The sequence spans 526 residues: Peptide chain release factor 3 (526 aa).

The region spanning 9–277 (DKRRTFAIIS…GIVEWAPIPQ (269 aa)) is the tr-type G domain. GTP-binding positions include 18-25 (SHPDAGKT), 86-90 (DTPGH), and 140-143 (NKLD).

Belongs to the TRAFAC class translation factor GTPase superfamily. Classic translation factor GTPase family. PrfC subfamily.

Its subcellular location is the cytoplasm. In terms of biological role, increases the formation of ribosomal termination complexes and stimulates activities of RF-1 and RF-2. It binds guanine nucleotides and has strong preference for UGA stop codons. It may interact directly with the ribosome. The stimulation of RF-1 and RF-2 is significantly reduced by GTP and GDP, but not by GMP. The polypeptide is Peptide chain release factor 3 (Shewanella halifaxensis (strain HAW-EB4)).